Reading from the N-terminus, the 238-residue chain is 1-(5-phosphoribosyl)-5-[(5-phosphoribosylamino)methylideneamino] imidazole-4-carboxamide isomerase (238 aa).

Aspartate 8 acts as the Proton acceptor in catalysis. Aspartate 129 (proton donor) is an active-site residue.

Belongs to the HisA/HisF family.

It is found in the cytoplasm. It carries out the reaction 1-(5-phospho-beta-D-ribosyl)-5-[(5-phospho-beta-D-ribosylamino)methylideneamino]imidazole-4-carboxamide = 5-[(5-phospho-1-deoxy-D-ribulos-1-ylimino)methylamino]-1-(5-phospho-beta-D-ribosyl)imidazole-4-carboxamide. It participates in amino-acid biosynthesis; L-histidine biosynthesis; L-histidine from 5-phospho-alpha-D-ribose 1-diphosphate: step 4/9. This chain is 1-(5-phosphoribosyl)-5-[(5-phosphoribosylamino)methylideneamino] imidazole-4-carboxamide isomerase, found in Jannaschia sp. (strain CCS1).